We begin with the raw amino-acid sequence, 325 residues long: Beta-ketoacyl-[acyl-carrier-protein] synthase III 2 (325 aa).

Residues cysteine 113 and histidine 250 contribute to the active site. The segment at 251–255 (SANLR) is ACP-binding. Asparagine 280 is an active-site residue.

It belongs to the thiolase-like superfamily. FabH family. As to quaternary structure, homodimer.

The protein localises to the cytoplasm. The enzyme catalyses 3-methylbutanoyl-CoA + malonyl-[ACP] + H(+) = 5-methyl-3-oxohexanoyl-[ACP] + CO2 + CoA. It catalyses the reaction 2-methylpropanoyl-CoA + malonyl-[ACP] + H(+) = 4-methyl-3-oxopentanoyl-[ACP] + CO2 + CoA. It carries out the reaction (2S)-2-methylbutanoyl-CoA + malonyl-[ACP] + H(+) = (4S)-4-methyl-3-oxohexanoyl-[ACP] + CO2 + CoA. The catalysed reaction is malonyl-[ACP] + acetyl-CoA + H(+) = 3-oxobutanoyl-[ACP] + CO2 + CoA. The enzyme catalyses malonyl-[ACP] + propanoyl-CoA + H(+) = 3-oxopentanoyl-[ACP] + CO2 + CoA. It catalyses the reaction butanoyl-CoA + malonyl-[ACP] + H(+) = 3-oxohexanoyl-[ACP] + CO2 + CoA. It carries out the reaction pentanoyl-CoA + malonyl-[ACP] + H(+) = 3-oxoheptanoyl-[ACP] + CO2 + CoA. The catalysed reaction is hexanoyl-CoA + malonyl-[ACP] + H(+) = 3-oxooctanoyl-[ACP] + CO2 + CoA. The enzyme catalyses heptanoyl-CoA + malonyl-[ACP] + H(+) = 3-oxononanoyl-[ACP] + CO2 + CoA. Its pathway is lipid metabolism; fatty acid biosynthesis. Its function is as follows. Catalyzes the condensation reaction of fatty acid synthesis by the addition to an acyl acceptor of two carbons from malonyl-ACP. Catalyzes the first condensation reaction which initiates fatty acid synthesis and may therefore play a role in governing the total rate of fatty acid production. Possesses both acetoacetyl-ACP synthase and acetyl transacylase activities. Has some substrate specificity for branched chain acyl-CoA, determining the biosynthesis of branched-chain of fatty acids instead of straight-chain. The polypeptide is Beta-ketoacyl-[acyl-carrier-protein] synthase III 2 (Bacillus subtilis (strain 168)).